A 1025-amino-acid chain; its full sequence is Multidrug resistance protein MdtC (1025 aa).

12 helical membrane-spanning segments follow: residues 3–23 (FFAL…AITL), 333–353 (EVEQ…FLFL), 360–380 (IIPA…MYLC), 387–407 (LSLM…IVVL), 431–451 (VGFT…PLLL), 463–483 (FAVT…TLTP), 528–548 (LVGV…ISIP), 853–873 (VILI…LYES), 875–895 (VHPL…LLAL), 897–917 (LFNA…IGIV), 953–973 (PIMM…LSGG), and 984–1004 (ITIV…TPVV).

Belongs to the resistance-nodulation-cell division (RND) (TC 2.A.6) family. MdtC subfamily. Part of a tripartite efflux system composed of MdtA, MdtB and MdtC. MdtC forms a heteromultimer with MdtB.

Its subcellular location is the cell inner membrane. Functionally, the MdtABC tripartite complex confers resistance against novobiocin and deoxycholate. The sequence is that of Multidrug resistance protein MdtC from Escherichia coli O1:K1 / APEC.